A 61-amino-acid polypeptide reads, in one-letter code: Cytotoxin 3 (61 aa).

Intrachain disulfides connect Cys-3–Cys-22, Cys-15–Cys-39, Cys-43–Cys-54, and Cys-55–Cys-60.

This sequence belongs to the three-finger toxin family. Short-chain subfamily. Type IB cytotoxin sub-subfamily. Expressed by the venom gland.

Its subcellular location is the secreted. Its function is as follows. This protein lyses red blood cells and has cardiotoxic and hypotensive activities. The polypeptide is Cytotoxin 3 (Hemachatus haemachatus (Rinkhals)).